A 165-amino-acid chain; its full sequence is Basic transcription factor 3 (165 aa).

The 65-residue stretch at 33–97 (TTDDKRLQST…PQTKKLQDIL (65 aa)) folds into the NAC-A/B domain. Residues 120 to 134 (QKQASGEGNAASATI) show a composition bias toward polar residues. The segment at 120 to 144 (QKQASGEGNAASATIQEEDDDDVPE) is disordered.

The protein belongs to the NAC-beta family. As to quaternary structure, part of the nascent polypeptide-associated complex (NAC). Interacts with EIF(ISO)4E.

The polypeptide is Basic transcription factor 3 (Arabidopsis thaliana (Mouse-ear cress)).